Reading from the N-terminus, the 394-residue chain is MAKAKFERNKPHVNVGTIGHVDHGKTTLTAAISAVLSKTYGGEVKNFAQIDNAPEERERGITINTSHIEYDTPIRHYAHVDCPGHADYVKNMITGAAQMDGAILVVAATDGPMPQTREHILLSRQVGVPFIIVFMNKCDMVDDEELLELVEMEVRELLSEYDFPGDDLPVIQGSALKALEGQPEWEAKILELAEALDTYIPEPARDIDKPFLLPIEDVFSISGRGTVVTGRVERGIVRVSDEVEIVGVRPTTKTTCTGVEMFRKLLDEGRAGENCGVLLRGTKRDDVERGQVLAKPGSINPHTTFESEVYVLSKEEGGRHTPFFKGYRPQFFFRTTDVTGTIELPEGVEMVMPGDNIKMVVTLIYPIAMDDGLRFAIREGGRTVGAGVVAKIIA.

The region spanning 10-204 is the tr-type G domain; that stretch reads KPHVNVGTIG…ALDTYIPEPA (195 aa). The G1 stretch occupies residues 19–26; that stretch reads GHVDHGKT. 19-26 lines the GTP pocket; that stretch reads GHVDHGKT. Threonine 26 serves as a coordination point for Mg(2+). The G2 stretch occupies residues 60 to 64; that stretch reads GITIN. The G3 stretch occupies residues 81 to 84; the sequence is DCPG. GTP-binding positions include 81-85 and 136-139; these read DCPGH and NKCD. The segment at 136-139 is G4; the sequence is NKCD. The G5 stretch occupies residues 174 to 176; that stretch reads SAL.

Belongs to the TRAFAC class translation factor GTPase superfamily. Classic translation factor GTPase family. EF-Tu/EF-1A subfamily. In terms of assembly, monomer.

The protein resides in the cytoplasm. It catalyses the reaction GTP + H2O = GDP + phosphate + H(+). In terms of biological role, GTP hydrolase that promotes the GTP-dependent binding of aminoacyl-tRNA to the A-site of ribosomes during protein biosynthesis. In Shewanella frigidimarina (strain NCIMB 400), this protein is Elongation factor Tu 1.